A 548-amino-acid chain; its full sequence is Glucose-6-phosphate isomerase (548 aa).

The Proton donor role is filled by Glu355. Catalysis depends on residues His386 and Lys514.

It belongs to the GPI family.

It localises to the cytoplasm. It carries out the reaction alpha-D-glucose 6-phosphate = beta-D-fructose 6-phosphate. It participates in carbohydrate biosynthesis; gluconeogenesis. The protein operates within carbohydrate degradation; glycolysis; D-glyceraldehyde 3-phosphate and glycerone phosphate from D-glucose: step 2/4. Its function is as follows. Catalyzes the reversible isomerization of glucose-6-phosphate to fructose-6-phosphate. This is Glucose-6-phosphate isomerase from Proteus mirabilis (strain HI4320).